The chain runs to 459 residues: tRNA modification GTPase MnmE (459 aa).

3 residues coordinate (6S)-5-formyl-5,6,7,8-tetrahydrofolate: arginine 22, glutamate 85, and arginine 124. The 160-residue stretch at 221–380 (GLSTVIVGRP…LEIQIKDLFF (160 aa)) folds into the TrmE-type G domain. Position 231 (asparagine 231) interacts with K(+). GTP contacts are provided by residues 231–236 (NVGKSS), 250–256 (TEVAGTT), and 275–278 (DTAG). A Mg(2+)-binding site is contributed by serine 235. K(+) is bound by residues threonine 250, valine 252, and threonine 255. Threonine 256 contributes to the Mg(2+) binding site. Lysine 459 lines the (6S)-5-formyl-5,6,7,8-tetrahydrofolate pocket.

It belongs to the TRAFAC class TrmE-Era-EngA-EngB-Septin-like GTPase superfamily. TrmE GTPase family. Homodimer. Heterotetramer of two MnmE and two MnmG subunits. K(+) serves as cofactor.

The protein resides in the cytoplasm. Its function is as follows. Exhibits a very high intrinsic GTPase hydrolysis rate. Involved in the addition of a carboxymethylaminomethyl (cmnm) group at the wobble position (U34) of certain tRNAs, forming tRNA-cmnm(5)s(2)U34. The sequence is that of tRNA modification GTPase MnmE from Staphylococcus epidermidis (strain ATCC 35984 / DSM 28319 / BCRC 17069 / CCUG 31568 / BM 3577 / RP62A).